The following is a 162-amino-acid chain: uncharacterized protein (162 aa).

The protein localises to the cytoplasm. It localises to the nucleus. This is an uncharacterized protein from Schizosaccharomyces pombe (strain 972 / ATCC 24843) (Fission yeast).